Here is a 213-residue protein sequence, read N- to C-terminus: 5-deoxy-D-ribulose 1-phosphate aldolase (213 aa).

Substrate contacts are provided by residues 28-29 (GN), 45-46 (SG), and 74-76 (SSE). Glutamate 76 functions as the Proton donor/acceptor in the catalytic mechanism. Mn(2+) is bound by residues glutamate 76, histidine 95, histidine 97, and histidine 157.

This sequence belongs to the aldolase class II family. Forms homooligomers, possibly homotetramers. It depends on Mn(2+) as a cofactor.

The enzyme catalyses 5-deoxy-D-ribulose 1-phosphate = dihydroxyacetone phosphate + acetaldehyde. The protein operates within carbohydrate degradation. Its function is as follows. Catalyzes the cleavage of 5-deoxy-D-ribulose 1-phosphate to yield dihydroxyacetone phosphate (DHAP) and acetaldehyde, as part of a 5-deoxyribose salvage pathway that recycles this toxic radical SAM enzyme by-product to mainstream metabolites. Is also able to catalyze the reverse reaction, using several aldehydes as substrate, with acetaldehyde being the preferred substrate. The polypeptide is 5-deoxy-D-ribulose 1-phosphate aldolase (Bacillus thuringiensis serovar kurstaki (strain ATCC 35866 / NRRL B-4488 / HD73)).